A 557-amino-acid chain; its full sequence is Cytochrome P450 734A2 (557 aa).

A helical membrane pass occupies residues 13–35 (WATWRVAAVAAAAAVWVTMHVAA). C495 contacts heme.

It belongs to the cytochrome P450 family. Heme serves as cofactor. Expressed in roots, shoot apex, leaf sheaths and leaf blades.

The protein resides in the membrane. In terms of biological role, cytochrome P450 involved in brassinosteroids (BRs) inactivation and regulation of BRs homeostasis. Is a multifunctional and multisubstrate enzyme that controls the endogenous bioactive BR content both by direct inactivation of castasterone (CS) and by decreasing the levels of BR precursors. Catalyzes the oxidation of carbon 22 hydroxylated BR intermediates to produce C26 oxidized metabolites. This is Cytochrome P450 734A2 (CYP734A2) from Oryza sativa subsp. japonica (Rice).